The primary structure comprises 354 residues: 3-dehydroquinate synthase (354 aa).

Residues 66–71 (DGERYK), 100–104 (GVVGD), 124–125 (TT), Lys137, and Lys146 each bind NAD(+). Glu179, His242, and His259 together coordinate Zn(2+).

Belongs to the sugar phosphate cyclases superfamily. Dehydroquinate synthase family. Co(2+) serves as cofactor. It depends on Zn(2+) as a cofactor. Requires NAD(+) as cofactor.

The protein resides in the cytoplasm. The catalysed reaction is 7-phospho-2-dehydro-3-deoxy-D-arabino-heptonate = 3-dehydroquinate + phosphate. It functions in the pathway metabolic intermediate biosynthesis; chorismate biosynthesis; chorismate from D-erythrose 4-phosphate and phosphoenolpyruvate: step 2/7. Functionally, catalyzes the conversion of 3-deoxy-D-arabino-heptulosonate 7-phosphate (DAHP) to dehydroquinate (DHQ). In Halorhodospira halophila (strain DSM 244 / SL1) (Ectothiorhodospira halophila (strain DSM 244 / SL1)), this protein is 3-dehydroquinate synthase.